The chain runs to 431 residues: GTPase Obg (431 aa).

Residues 1–158 (MFVDQVKINV…REIRLELKVL (158 aa)) enclose the Obg domain. Residues 125–145 (GNIHFASPKNPAPEIAENGEP) form a disordered region. The region spanning 159 to 335 (ADVGLVGFPS…LLQRTADMLA (177 aa)) is the OBG-type G domain. GTP is bound by residues 165 to 172 (GFPSVGKS), 190 to 194 (FTTLV), 212 to 215 (DLPG), 282 to 285 (NKMD), and 316 to 318 (SAL). Mg(2+) contacts are provided by Ser172 and Thr192. An OCT domain is found at 353–431 (YNFQPEAEFT…IDDFTFEYMA (79 aa)).

The protein belongs to the TRAFAC class OBG-HflX-like GTPase superfamily. OBG GTPase family. Monomer. It depends on Mg(2+) as a cofactor.

It is found in the cytoplasm. Its function is as follows. An essential GTPase which binds GTP, GDP and possibly (p)ppGpp with moderate affinity, with high nucleotide exchange rates and a fairly low GTP hydrolysis rate. Plays a role in control of the cell cycle, stress response, ribosome biogenesis and in those bacteria that undergo differentiation, in morphogenesis control. The sequence is that of GTPase Obg from Levilactobacillus brevis (strain ATCC 367 / BCRC 12310 / CIP 105137 / JCM 1170 / LMG 11437 / NCIMB 947 / NCTC 947) (Lactobacillus brevis).